A 132-amino-acid polypeptide reads, in one-letter code: Snaclec bothroinsularin subunit alpha (132 aa).

Intrachain disulfides connect Cys-2/Cys-13, Cys-30/Cys-127, and Cys-102/Cys-119. Residues 9-128 (YGQYCYKFFQ…CGQQNPFVCK (120 aa)) form the C-type lectin domain.

It belongs to the snaclec family. As to quaternary structure, heterodimer of subunits alpha and beta; disulfide-linked. Expressed by the venom gland.

Its subcellular location is the secreted. Functionally, thrombin and prothrombin (F2) inhibitor. The IC(50) of thrombin-induced platelet aggregation and fibrinocoagulation is 62 and 35 nM, respectively. Its inhibitory activity is at least 10-fold lower than that observed for other thrombin inhibitors. The chain is Snaclec bothroinsularin subunit alpha from Bothrops insularis (Golden lancehead).